Reading from the N-terminus, the 470-residue chain is Methylenetetrahydrofolate--tRNA-(uracil-5-)-methyltransferase TrmFO (470 aa).

10-15 provides a ligand contact to FAD; that stretch reads GAGLAG.

Belongs to the MnmG family. TrmFO subfamily. Requires FAD as cofactor.

The protein localises to the cytoplasm. It carries out the reaction uridine(54) in tRNA + (6R)-5,10-methylene-5,6,7,8-tetrahydrofolate + NADH + H(+) = 5-methyluridine(54) in tRNA + (6S)-5,6,7,8-tetrahydrofolate + NAD(+). The catalysed reaction is uridine(54) in tRNA + (6R)-5,10-methylene-5,6,7,8-tetrahydrofolate + NADPH + H(+) = 5-methyluridine(54) in tRNA + (6S)-5,6,7,8-tetrahydrofolate + NADP(+). Its function is as follows. Catalyzes the folate-dependent formation of 5-methyl-uridine at position 54 (M-5-U54) in all tRNAs. The protein is Methylenetetrahydrofolate--tRNA-(uracil-5-)-methyltransferase TrmFO of Prochlorococcus marinus (strain MIT 9312).